We begin with the raw amino-acid sequence, 284 residues long: Pantothenate synthetase (284 aa).

ATP is bound at residue 30–37 (MGNLHDGH). His-37 serves as the catalytic Proton donor. Position 61 (Gln-61) interacts with (R)-pantoate. Gln-61 is a binding site for beta-alanine. 149 to 152 (GEKD) serves as a coordination point for ATP. Gln-155 provides a ligand contact to (R)-pantoate. ATP is bound by residues Val-178 and 186-189 (LSSR).

It belongs to the pantothenate synthetase family. In terms of assembly, homodimer.

The protein resides in the cytoplasm. The catalysed reaction is (R)-pantoate + beta-alanine + ATP = (R)-pantothenate + AMP + diphosphate + H(+). Its pathway is cofactor biosynthesis; (R)-pantothenate biosynthesis; (R)-pantothenate from (R)-pantoate and beta-alanine: step 1/1. Its function is as follows. Catalyzes the condensation of pantoate with beta-alanine in an ATP-dependent reaction via a pantoyl-adenylate intermediate. This Enterobacter sp. (strain 638) protein is Pantothenate synthetase.